The sequence spans 252 residues: Chitooligosaccharide deacetylase (252 aa).

Residues histidine 61 and histidine 125 each contribute to the Mg(2+) site.

It belongs to the YdjC deacetylase family. ChbG subfamily. As to quaternary structure, homodimer. Mg(2+) is required as a cofactor.

It localises to the cytoplasm. It carries out the reaction N,N'-diacetylchitobiose + H2O = N-acetyl-beta-D-glucosaminyl-(1-&gt;4)-D-glucosamine + acetate. It catalyses the reaction diacetylchitobiose-6'-phosphate + H2O = N'-monoacetylchitobiose-6'-phosphate + acetate. It participates in glycan degradation; chitin degradation. Functionally, involved in the degradation of chitin. ChbG is essential for growth on the acetylated chitooligosaccharides chitobiose and chitotriose but is dispensable for growth on cellobiose and chitosan dimer, the deacetylated form of chitobiose. Deacetylation of chitobiose-6-P and chitotriose-6-P is necessary for both the activation of the chb promoter by the regulatory protein ChbR and the hydrolysis of phosphorylated beta-glucosides by the phospho-beta-glucosidase ChbF. Catalyzes the removal of only one acetyl group from chitobiose-6-P to yield monoacetylchitobiose-6-P, the inducer of ChbR and the substrate of ChbF. The protein is Chitooligosaccharide deacetylase of Salmonella paratyphi C (strain RKS4594).